Here is a 1206-residue protein sequence, read N- to C-terminus: Cilia- and flagella-associated protein 157 (1206 aa).

4 disordered regions span residues 26–52 (GGGG…GRDL), 79–109 (RAEQ…QQAP), 125–173 (EATC…RGPL), and 327–405 (GSGK…EEDW). 3 stretches are compositionally biased toward low complexity: residues 88–109 (GRPQ…QQAP), 156–173 (AKAV…RGPL), and 385–397 (QQLG…QPGG). 3 coiled-coil regions span residues 634–732 (TDEL…KTKD), 799–833 (TEKL…LARR), and 876–903 (LHLA…KTAE). Disordered regions lie at residues 936 to 990 (TTTN…DELS), 1011 to 1072 (LSHG…GATS), and 1168 to 1206 (PWGK…SLKV). Composition is skewed to low complexity over residues 951-973 (AGAD…SSSA) and 1014-1035 (GPLS…ALAG). Gly residues-rich tracts occupy residues 1037 to 1046 (WGPGSPGGSR) and 1058 to 1067 (SAGGMGGPQG). 2 stretches are compositionally biased toward polar residues: residues 1175–1184 (QQPLTTTKHS) and 1193–1206 (GPSN…SLKV).

This sequence belongs to the CFAP157 family.

It is found in the cell projection. Its subcellular location is the cilium. It localises to the flagellum. The protein is Cilia- and flagella-associated protein 157 of Chlamydomonas reinhardtii (Chlamydomonas smithii).